A 510-amino-acid chain; its full sequence is 2,3-bisphosphoglycerate-independent phosphoglycerate mutase (510 aa).

Mn(2+) is bound by residues Asp15 and Ser65. Catalysis depends on Ser65, which acts as the Phosphoserine intermediate. Residues His126, Arg155–Asp156, Arg187, Arg193, Arg259–Arg262, and Lys332 each bind substrate. Mn(2+)-binding residues include Asp399, His403, Asp440, His441, and His458.

It belongs to the BPG-independent phosphoglycerate mutase family. Mn(2+) is required as a cofactor.

Its subcellular location is the plastid. The protein resides in the chloroplast. The catalysed reaction is (2R)-2-phosphoglycerate = (2R)-3-phosphoglycerate. The protein operates within carbohydrate degradation; glycolysis; pyruvate from D-glyceraldehyde 3-phosphate: step 3/5. In terms of biological role, catalyzes the interconversion of 2-phosphoglycerate and 3-phosphoglycerate. The sequence is that of 2,3-bisphosphoglycerate-independent phosphoglycerate mutase from Antithamnion sp. (Red alga).